Consider the following 347-residue polypeptide: Eukaryotic translation initiation factor 3 subunit I (347 aa).

WD repeat units follow at residues 8 to 49, 50 to 89, 146 to 186, 198 to 237, 239 to 278, and 295 to 336; these read GHER…GTYE, GHNG…CLFT, TFSG…PESG, AHTD…VIKT, ATET…GRFE, and GHFG…SKLY.

It belongs to the eIF-3 subunit I family. As to quaternary structure, component of the eukaryotic translation initiation factor 3 (eIF-3) complex.

It is found in the cytoplasm. Functionally, component of the eukaryotic translation initiation factor 3 (eIF-3) complex, which is involved in protein synthesis of a specialized repertoire of mRNAs and, together with other initiation factors, stimulates binding of mRNA and methionyl-tRNAi to the 40S ribosome. The eIF-3 complex specifically targets and initiates translation of a subset of mRNAs involved in cell proliferation. This Mycosarcoma maydis (Corn smut fungus) protein is Eukaryotic translation initiation factor 3 subunit I.